The sequence spans 366 residues: Histidinol-phosphate aminotransferase (366 aa).

Position 231 is an N6-(pyridoxal phosphate)lysine (lysine 231).

This sequence belongs to the class-II pyridoxal-phosphate-dependent aminotransferase family. Histidinol-phosphate aminotransferase subfamily. Requires pyridoxal 5'-phosphate as cofactor.

The catalysed reaction is L-histidinol phosphate + 2-oxoglutarate = 3-(imidazol-4-yl)-2-oxopropyl phosphate + L-glutamate. Its pathway is amino-acid biosynthesis; L-histidine biosynthesis; L-histidine from 5-phospho-alpha-D-ribose 1-diphosphate: step 7/9. This is Histidinol-phosphate aminotransferase from Halobacterium salinarum (strain ATCC 29341 / DSM 671 / R1).